Here is a 252-residue protein sequence, read N- to C-terminus: Short-chain dehydrogenase anuI (252 aa).

Positions 18, 65, 92, 171, 175, and 206 each coordinate NADP(+). The Proton acceptor role is filled by Tyr171. Tyr171 (proton donor) is an active-site residue. The Lowers pKa of active site Tyr role is filled by Lys175.

The protein belongs to the short-chain dehydrogenases/reductases (SDR) family.

Highly reducing polyketide synthase; part of the gene cluster that mediates the biosynthesis of annullatin D, an alkylated aromatic polyketide with a fused dihydrobenzofuran lactone ring system that exhibits potent agonistic activities toward the cannabinoid receptors. AnuI does not seem to play a role within the pathway. The annullatin backbone 2-hydroxymethyl-3-pentylphenol is assembled from one acetyl-CoA starter unit and 5 malonyl-CoA elongation units by cooperation of the highly reducing polyketide synthase anuA, the short-chain dehydrogenase anuB and the oxidoreductase anuC, before being hydroxylated at the C-5 alkyl chain by the cytochrome P450 monooxygenase anuE to form (8S)-annullatin E. The prenyltransferase anuH subsequently installs one isoprenyl group at the benzene ring to form (8S)-annullatin J. Enzymatic or nonenzymatic dihydro-benzofuran ring formation between the prenyl and the phenolic hydroxyl groups in (8S)-annullatin J results in two diastereomers (2S,9S)-annullatin H and compound 12. The intermediate (2S,9S)-annullatin H is then converted to (2S,9S)-annullatin D by the FAD-linked oxidoreductase anuG-catalyzed five-member lactone ring formation. The isomer 12 acts as a substrate for the short-chain dehydrogenase anuF and is oxidized to (2R)-annullatin F, which is subsequently acetylated by an acetyltransferase leading to (2R)-annullatin G formation. The remaining enzymes identified within the cluster, anuD, anuI and anuJ, seem not to be involved in annullatin biosynthesis. This Penicillium roqueforti (strain FM164) protein is Short-chain dehydrogenase anuI.